Here is a 365-residue protein sequence, read N- to C-terminus: Zinc finger TRAF-type-containing protein 1-A (365 aa).

The tract at residues 1–56 (MSEEREAPGPLASSSAGLGAEVGQEEVPGGAGPARLLLLPSDSDGPPKKRLRSEAE) is disordered. The RING-type; degenerate zinc finger occupies 72–117 (CTVCLDLPKASVYQCTNGHLMCAGCFIHLLADSRLKEEQATCPNCR). A TRAF-type zinc finger spans residues 113 to 186 (CPNCRCEISK…PWEGPYHELT (74 aa)).

The protein belongs to the ZFTRAF1 family.

The protein localises to the cytoplasm. The chain is Zinc finger TRAF-type-containing protein 1-A from Xenopus laevis (African clawed frog).